Reading from the N-terminus, the 294-residue chain is Type 4 apparatus protein DotZ (294 aa).

The T4BSS is a complex nanomachine composed of several subcomplexes. This subunit is part of the Type IV Coupling Complex (T4CC), a subcomplex composed of the DotLMNYZ core and the IcmSW-LvgA adapter subunits, linked by the C-terminal tail of DotL. Six DotLMNYZ hetero-pentameric units may assemble into a hexameric nanomachine, forming an inner membrane channel for effectors to pass through. Makes significant contact with DotN and DotY, but engages weakly with DotM and DotL. DotY and DotZ are co-dependent for the assembly into the T4CC.

The protein resides in the cytoplasm. Its function is as follows. Component of the Dot/Icm type IVB secretion system (T4BSS), which is used to inject bacterial effector proteins into eukaryotic host cells. Part of a subcomplex which recruits effector proteins and delivers them to the core transmembrane subcomplex. DotY and DotZ play a role in effector translocation, but are not essential and do not influence the stability of the subcomplex main components. The DotY/DotZ main function is to optimize secretion by modulating the delivery trajectory of the IcmSW module and the localization of the machinery to the poles. In Legionella pneumophila subsp. pneumophila (strain Philadelphia 1 / ATCC 33152 / DSM 7513), this protein is Type 4 apparatus protein DotZ.